A 323-amino-acid polypeptide reads, in one-letter code: MIRSVVRGFGAALPKRVMTNKEIESRVDTSDEWIVQRTGIRQRYIAGEGETSASLGEAAARAALERAGLTPDDVDLIIVATSTPDNTFPATAVNIQNRLGMRHGAAFDMQAVCSGFVYAVATADAYIRGGLSKRALVIGAETFSRLLDWTDRTTCVLFGDGAGAIVLEAQEAAGTKADRGVLTAQLRSDGAHRDKLYVDGGPSTTGTVGHLRMEGREVFKHAVGMITDVIEAAFEATGTTADDIDWLVPHQANRRIIDGSAKKLGIPLEKVVVTVDLHGNTSAASIPLALDAAASDGRIKKGDLVMLEAMGGGFTWGSVLLRW.

Catalysis depends on residues C113 and H250. Residues 251–255 (QANRR) are ACP-binding. Residue N280 is part of the active site.

Belongs to the thiolase-like superfamily. FabH family. As to quaternary structure, homodimer.

The protein localises to the cytoplasm. It catalyses the reaction malonyl-[ACP] + acetyl-CoA + H(+) = 3-oxobutanoyl-[ACP] + CO2 + CoA. The protein operates within lipid metabolism; fatty acid biosynthesis. In terms of biological role, catalyzes the condensation reaction of fatty acid synthesis by the addition to an acyl acceptor of two carbons from malonyl-ACP. Catalyzes the first condensation reaction which initiates fatty acid synthesis and may therefore play a role in governing the total rate of fatty acid production. Possesses both acetoacetyl-ACP synthase and acetyl transacylase activities. Its substrate specificity determines the biosynthesis of branched-chain and/or straight-chain of fatty acids. This Rhizobium meliloti (strain 1021) (Ensifer meliloti) protein is Beta-ketoacyl-[acyl-carrier-protein] synthase III.